The following is an 89-amino-acid chain: Ubiquinol-cytochrome-c reductase complex assembly factor 3 (89 aa).

Topologically, residues 1–7 are mitochondrial matrix; sequence MEVARKA. Residues 8-28 form a helical membrane-spanning segment; that stretch reads LVAVAVLGGGAGVGSILFALV. The mediates lipid-binding stretch occupies residues 23–80; that stretch reads ILFALVTPGELQKQSMLQEMPERDSRRRDEAVRTTELVMATLKDAAATKENVAWRRNW. Over 29 to 89 the chain is Mitochondrial intermembrane; it reads TPGELQKQSM…WTVSGDGRSA (61 aa).

This sequence belongs to the UQCC3 family. Associates with the ubiquinol-cytochrome c reductase complex (mitochondrial respiratory chain complex III(CIII) or cytochrome b-c1 complex). Interacts with UQCC1. Forms a complex, named COMC, composed of UQCC1, UQCC2; UQCC3 and UQCC4; mediates MT-CYB hemylation and association with the first nuclear-encoded complex III subunit UQCRQ. In terms of processing, probably cleaved by OMA1 under mitochondrial stress conditions.

Its subcellular location is the mitochondrion inner membrane. Functionally, required for the assembly of the ubiquinol-cytochrome c reductase complex (mitochondrial respiratory chain complex III or cytochrome b-c1 complex), mediating cytochrome b recruitment and probably stabilization within the complex. Thereby, plays an important role in ATP production by mitochondria. Cardiolipin-binding protein, it may also control the cardiolipin composition of mitochondria membranes and their morphology. This Mus musculus (Mouse) protein is Ubiquinol-cytochrome-c reductase complex assembly factor 3.